The chain runs to 179 residues: Large ribosomal subunit protein uL6 (179 aa).

The protein belongs to the universal ribosomal protein uL6 family. As to quaternary structure, part of the 50S ribosomal subunit.

Its function is as follows. This protein binds to the 23S rRNA, and is important in its secondary structure. It is located near the subunit interface in the base of the L7/L12 stalk, and near the tRNA binding site of the peptidyltransferase center. This chain is Large ribosomal subunit protein uL6, found in Leptospira interrogans serogroup Icterohaemorrhagiae serovar copenhageni (strain Fiocruz L1-130).